The sequence spans 226 residues: Octanoyltransferase (226 aa).

A BPL/LPL catalytic domain is found at Pro-31–Pro-226. Residues Arg-70–His-77, Ala-159–Gly-161, and Gly-172–Ala-174 each bind substrate. Cys-190 functions as the Acyl-thioester intermediate in the catalytic mechanism.

Belongs to the LipB family.

It is found in the cytoplasm. It catalyses the reaction octanoyl-[ACP] + L-lysyl-[protein] = N(6)-octanoyl-L-lysyl-[protein] + holo-[ACP] + H(+). Its pathway is protein modification; protein lipoylation via endogenous pathway; protein N(6)-(lipoyl)lysine from octanoyl-[acyl-carrier-protein]: step 1/2. In terms of biological role, catalyzes the transfer of endogenously produced octanoic acid from octanoyl-acyl-carrier-protein onto the lipoyl domains of lipoate-dependent enzymes. Lipoyl-ACP can also act as a substrate although octanoyl-ACP is likely to be the physiological substrate. The polypeptide is Octanoyltransferase (Variovorax paradoxus (strain S110)).